The chain runs to 170 residues: Adenine phosphoribosyltransferase (170 aa).

Belongs to the purine/pyrimidine phosphoribosyltransferase family. As to quaternary structure, homodimer.

It localises to the cytoplasm. It catalyses the reaction AMP + diphosphate = 5-phospho-alpha-D-ribose 1-diphosphate + adenine. The protein operates within purine metabolism; AMP biosynthesis via salvage pathway; AMP from adenine: step 1/1. Functionally, catalyzes a salvage reaction resulting in the formation of AMP, that is energically less costly than de novo synthesis. The chain is Adenine phosphoribosyltransferase from Mycoplasma mycoides subsp. mycoides SC (strain CCUG 32753 / NCTC 10114 / PG1).